A 179-amino-acid chain; its full sequence is Putative 5'(3')-deoxyribonucleotidase (179 aa).

The active-site Nucleophile is aspartate 9. Residues aspartate 9, aspartate 11, and aspartate 135 each coordinate Mg(2+). Aspartate 11 functions as the Proton donor in the catalytic mechanism.

This sequence belongs to the 5'(3')-deoxyribonucleotidase family. Requires Mg(2+) as cofactor.

Functionally, dephosphorylates the 5' and 2'(3')-phosphates of deoxyribonucleotides. In Staphylococcus epidermidis (strain ATCC 35984 / DSM 28319 / BCRC 17069 / CCUG 31568 / BM 3577 / RP62A), this protein is Putative 5'(3')-deoxyribonucleotidase.